We begin with the raw amino-acid sequence, 356 residues long: C-C chemokine receptor type 8 (356 aa).

Residues 1-35 (MDYTLDPSMTTMTDYYYPDSLSSPCDGELIQRNDK) lie on the Extracellular side of the membrane. Residues 36–63 (LLLAVFYCLLFVFSLLGNSLVILVLVVC) form a helical membrane-spanning segment. At 64 to 73 (KKLRNITDIY) the chain is on the cytoplasmic side. Residues 74–93 (LLNLALSDLLFVFSFPFQTY) traverse the membrane as a helical segment. At 94–107 (YQLDQWVFGTVMCK) the chain is on the extracellular side. Cys-106 and Cys-184 are disulfide-bonded. Residues 108–129 (VVSGFYYIGFYSSMFFITLMSV) form a helical membrane-spanning segment. Residues 130–146 (DRYLAVVHAVYAIKVRT) lie on the Cytoplasmic side of the membrane. A helical transmembrane segment spans residues 147–172 (IRMGTTTLSLLVWLTAIMATIPLLVF). The Extracellular portion of the chain corresponds to 173–203 (YQVASEDGVLQCYSFYNQQTLKWKIFTNFEM). A helical membrane pass occupies residues 204–223 (NILGLLIPFTIFMFCYIKIL). Topologically, residues 224–239 (HQLKRCQNHNKTKAIR) are cytoplasmic. A helical transmembrane segment spans residues 240-264 (LVLIVVIASLLFWVPFNVVLFLTSL). The Extracellular portion of the chain corresponds to 265-281 (HSMHILDGCSISQQLNY). A helical transmembrane segment spans residues 282–305 (ATHVTEIISFTHCCVNPVIYAFVG). Over 306–356 (EKFKKHLSEIFQKSCSHIFIYLGRQMPRESCEKSSSCQQHSFRSSSIDYIL) the chain is Cytoplasmic.

It belongs to the G-protein coupled receptor 1 family.

It is found in the cell membrane. In terms of biological role, receptor for the chemokines CCL1/SCYA1/I-309. May regulate monocyte chemotaxis and thymic cell line apoptosis. In Macaca mulatta (Rhesus macaque), this protein is C-C chemokine receptor type 8 (CCR8).